Here is a 292-residue protein sequence, read N- to C-terminus: RNA polymerase II transcriptional coactivator SUB1 (292 aa).

2 disordered regions span residues 1-31 and 117-292; these read MSYYNRYRNKRRSDNGGGNLSNSNNNNGGMP and LLSD…SEEE. A compositionally biased stretch (low complexity) spans 20–31; the sequence is LSNSNNNNGGMP. At Ser-119 the chain carries Phosphoserine. Composition is skewed to basic and acidic residues over residues 133–166, 179–191, 204–240, and 251–267; these read NNDKDKNGKDKNSPKKRREDKSKASNESHDLEPR, PHEENIQNAEREA, KQQEERKQKEKEEAEEAKAKAVAEQEKEAKAKEKIAE, and AKKEDIVSNINESKDAN. Residues Ser-268, Ser-269, and Ser-289 each carry the phosphoserine modification.

This sequence belongs to the transcriptional coactivator PC4 family.

Its subcellular location is the nucleus. Plays a role in the release of TFIIB from the transcription complex during transcription initiation. Binds to TFIIB and specifically inhibits the formation of the TBP-TFIIB-promoter complexes. The chain is RNA polymerase II transcriptional coactivator SUB1 (SUB1) from Saccharomyces cerevisiae (strain ATCC 204508 / S288c) (Baker's yeast).